A 204-amino-acid polypeptide reads, in one-letter code: Protein LURP-one-related 14 (204 aa).

Belongs to the LOR family.

In terms of biological role, might be related to the phospholipid scramblase and tubby-like superfamily of membrane tethered transcription factors. This chain is Protein LURP-one-related 14, found in Arabidopsis thaliana (Mouse-ear cress).